The primary structure comprises 414 residues: Carbohydrate sulfotransferase 12 (414 aa).

The Cytoplasmic portion of the chain corresponds to 1 to 5; it reads MTKAR. Residues 6-26 form a helical; Signal-anchor for type II membrane protein membrane-spanning segment; sequence LFRLWLVLGSVFMILLIIVYW. At 27–414 the chain is on the lumenal side; the sequence is DSAGAAHFYL…YPKPENLLRD (388 aa). Positions 80–125 are disordered; that stretch reads QSDLPRKETEQPPAPGSMEESVRGYDWSPRDARRSPDQGRQQAERR. Positions 99–125 are enriched in basic and acidic residues; that stretch reads ESVRGYDWSPRDARRSPDQGRQQAERR. An N-linked (GlcNAc...) asparagine glycan is attached at N134. 171 to 177 contributes to the 3'-phosphoadenylyl sulfate binding site; the sequence is PKVACTN. An N-linked (GlcNAc...) asparagine glycan is attached at N209. 245 to 253 provides a ligand contact to 3'-phosphoadenylyl sulfate; the sequence is RDPFVRLIS. Residues N280 and N370 are each glycosylated (N-linked (GlcNAc...) asparagine).

Belongs to the sulfotransferase 2 family. In terms of tissue distribution, widely expressed. Expressed a high level in spinal chord, heart, spleen, thyroid, pituitary gland, adrenal gland, peripheral blood leukocytes, thymus, lung, small intestine, fetal kidney, fetal spleen and fetal lung.

The protein localises to the golgi apparatus membrane. It catalyses the reaction chondroitin beta-D-glucuronate + n 3'-phosphoadenylyl sulfate = chondroitin 4'-sulfate + n adenosine 3',5'-bisphosphate + n H(+). Its function is as follows. Catalyzes the transfer of sulfate to position 4 of the N-acetylgalactosamine (GalNAc) residue of chondroitin and desulfated dermatan sulfate. Chondroitin sulfate constitutes the predominant proteoglycan present in cartilage and is distributed on the surfaces of many cells and extracellular matrices. Activity toward partially desulfated dermatan sulfate is however lower. Does not form 4, 6-di-O-sulfated GalNAc when chondroitin sulfate C is used as an acceptor. The protein is Carbohydrate sulfotransferase 12 (CHST12) of Homo sapiens (Human).